The sequence spans 287 residues: (S)-phenoxypropionate/alpha-ketoglutarate-dioxygenase (287 aa).

Histidine 102 and aspartate 104 together coordinate Fe cation. Residues threonine 129 and tryptophan 242 each coordinate 2-oxoglutarate. Histidine 257 lines the Fe cation pocket. Residue arginine 268 participates in 2-oxoglutarate binding.

This sequence belongs to the TfdA dioxygenase family. In terms of assembly, monomer. Requires Fe cation as cofactor. L-ascorbate serves as cofactor.

The enzyme catalyses (S)-2-(4-chloro-2-methylphenoxy)propanoate + 2-oxoglutarate + O2 = 2-methyl-4-chlorophenol + pyruvate + succinate + CO2. It catalyses the reaction (S)-(2,4-dichlorophenoxy)propanoate + 2-oxoglutarate + O2 = 2,4-dichlorophenol + pyruvate + succinate + CO2. The protein operates within xenobiotic degradation; 2-(2,4-dichlorophenoxy)propanoate degradation. Involved in the degradation of the phenoxypropionate herbicides. Catalyzes the enantiospecific cleavage of the ether bond in the herbicid S-dichlorprop ((S)-2-(2,4-dichlorophenoxy)propionate)(S-2,4-DP) and S-mecoprop ((S)-2-(4-chloro-2-methylphenoxy)propionate)(S-2,4-MCPP). It can also accept (RS)-2-(4-chloro-2-methylphenoxy)propionate ((RS)-2,4-MCPP) and phenoxyacetate derivatives such as 2,4-dichlorophenoxyacetate (2,4-D), however it can only accept 2-oxoglutarate as oxygen acceptor. The chain is (S)-phenoxypropionate/alpha-ketoglutarate-dioxygenase from Sphingobium herbicidovorans (strain ATCC 700291 / DSM 11019 / CCUG 56400 / KCTC 2939 / LMG 18315 / NBRC 16415 / MH) (Sphingomonas herbicidovorans).